The chain runs to 611 residues: Dual specificity protein phosphatase CDC14AB (611 aa).

The segment at 23–178 (DLLGASEFIK…ALQHGFLNFE (156 aa)) is a. The linker stretch occupies residues 179-192 (TFDVNEYEHYERVE). Residues 193-359 (NGDLNWITPG…HGDSLRSKQR (167 aa)) form a b region. The Tyrosine-protein phosphatase domain occupies 194–352 (GDLNWITPGK…KQASLWAHGD (159 aa)). The active-site Phosphocysteine intermediate is Cys294. The tract at residues 408-611 (KLRALKGRRQ…PSLQSEYVQY (204 aa)) is disordered. Residues 456 to 490 (SPLKSSKVPASSSSSSSSSSVSASAKRIGRSSSSS) are compositionally biased toward low complexity. Residues 491-511 (TNLKSTRLASSLGNLYEPNTE) are compositionally biased toward polar residues. The segment covering 512–553 (SISSGKPPSPSSFTPHPVRTTYNYHYEVNNNNNQYSTTSSPS) has biased composition (low complexity). Composition is skewed to polar residues over residues 554–569 (KSLG…SGAS) and 591–611 (GLST…YVQY).

The protein belongs to the protein-tyrosine phosphatase family. Non-receptor class CDC14 subfamily.

It localises to the nucleus. The protein resides in the cytoplasm. The protein localises to the cytoskeleton. Its subcellular location is the microtubule organizing center. It is found in the centrosome. It localises to the spindle pole. The protein resides in the spindle. The protein localises to the cell projection. Its subcellular location is the kinocilium. The catalysed reaction is O-phospho-L-tyrosyl-[protein] + H2O = L-tyrosyl-[protein] + phosphate. It catalyses the reaction O-phospho-L-seryl-[protein] + H2O = L-seryl-[protein] + phosphate. It carries out the reaction O-phospho-L-threonyl-[protein] + H2O = L-threonyl-[protein] + phosphate. In terms of biological role, dual-specificity phosphatase. Required for centrosome separation and productive cytokinesis during cell division. Dephosphorylates SIRT2 around early anaphase. May dephosphorylate the APC subunit FZR1/CDH1, thereby promoting APC-FZR1 dependent degradation of mitotic cyclins and subsequent exit from mitosis. The polypeptide is Dual specificity protein phosphatase CDC14AB (cdc14ab) (Danio rerio (Zebrafish)).